Here is a 375-residue protein sequence, read N- to C-terminus: Erythronate-4-phosphate dehydrogenase (375 aa).

Ser-45 and Thr-66 together coordinate substrate. NAD(+)-binding residues include Asp-146 and Thr-175. Arg-208 is a catalytic residue. An NAD(+)-binding site is contributed by Asp-232. Glu-237 is a catalytic residue. His-254 (proton donor) is an active-site residue. Gly-257 contributes to the NAD(+) binding site. Residue Tyr-258 participates in substrate binding.

This sequence belongs to the D-isomer specific 2-hydroxyacid dehydrogenase family. PdxB subfamily. In terms of assembly, homodimer.

Its subcellular location is the cytoplasm. It carries out the reaction 4-phospho-D-erythronate + NAD(+) = (R)-3-hydroxy-2-oxo-4-phosphooxybutanoate + NADH + H(+). Its pathway is cofactor biosynthesis; pyridoxine 5'-phosphate biosynthesis; pyridoxine 5'-phosphate from D-erythrose 4-phosphate: step 2/5. Catalyzes the oxidation of erythronate-4-phosphate to 3-hydroxy-2-oxo-4-phosphonooxybutanoate. This is Erythronate-4-phosphate dehydrogenase from Yersinia pseudotuberculosis serotype O:1b (strain IP 31758).